The primary structure comprises 187 residues: BCL2/adenovirus E1B 19 kDa protein-interacting protein 3 (187 aa).

The tract at residues 42–86 (LDAQHESGRSSSKSSHCDSPPRSQTPQDTNRAEIDSHSFGEKNST) is disordered. Serine 48, serine 60, serine 77, serine 79, serine 85, and serine 88 each carry phosphoserine. The segment covering 50 to 63 (RSSSKSSHCDSPPR) has biased composition (low complexity). Positions 71-81 (NRAEIDSHSFG) are enriched in basic and acidic residues. Residues 93–118 (IERRREVESILKKNSDWIWDWSSRPE) carry the BH3 motif. A helical transmembrane segment spans residues 157–177 (VFLPSLLLSHLLAIGLGIYIG).

The protein belongs to the NIP3 family. Homodimer. Binds to BCL2. Interacts with BNIP3L and ACAA2. Interacts (via BH3 domain) with SPATA18 (via coiled-coil domains). Interacts with BOK; promotes BOK oligomerization. Interacts with PPTC7; this interaction promotes BNIP3 degradation.

It localises to the mitochondrion. The protein resides in the mitochondrion outer membrane. Its function is as follows. Apoptosis-inducing protein that can overcome BCL2 suppression. May play a role in repartitioning calcium between the two major intracellular calcium stores in association with BCL2. Involved in mitochondrial quality control via its interaction with SPATA18/MIEAP: in response to mitochondrial damage, participates in mitochondrial protein catabolic process (also named MALM) leading to the degradation of damaged proteins inside mitochondria. The physical interaction of SPATA18/MIEAP, BNIP3 and BNIP3L/NIX at the mitochondrial outer membrane may play a critical role in the translocation of lysosomal proteins from the cytoplasm to the mitochondrial matrix. The physical interaction of SPATA18/MIEAP, BNIP3 and BNIP3L/NIX at the mitochondrial outer membrane regulates the opening of a pore in the mitochondrial double membrane in order to mediate the translocation of lysosomal proteins from the cytoplasm to the mitochondrial matrix. Plays an important role in the calprotectin (S100A8/A9)-induced cell death pathway. The sequence is that of BCL2/adenovirus E1B 19 kDa protein-interacting protein 3 from Mus musculus (Mouse).